The sequence spans 507 residues: Histidine ammonia-lyase (507 aa).

Positions 145–147 form a cross-link, 5-imidazolinone (Ala-Gly); sequence ASG. The residue at position 146 (Ser-146) is a 2,3-didehydroalanine (Ser).

It belongs to the PAL/histidase family. In terms of processing, contains an active site 4-methylidene-imidazol-5-one (MIO), which is formed autocatalytically by cyclization and dehydration of residues Ala-Ser-Gly.

It localises to the cytoplasm. It catalyses the reaction L-histidine = trans-urocanate + NH4(+). The protein operates within amino-acid degradation; L-histidine degradation into L-glutamate; N-formimidoyl-L-glutamate from L-histidine: step 1/3. The sequence is that of Histidine ammonia-lyase from Treponema denticola (strain ATCC 35405 / DSM 14222 / CIP 103919 / JCM 8153 / KCTC 15104).